Reading from the N-terminus, the 473-residue chain is Zinc transporter SLC39A7 (473 aa).

The chain crosses the membrane as a helical span at residues 11–31 (VAVGLLTWAALGLLVAGHGGH). 2 stretches are compositionally biased toward basic and acidic residues: residues 44-56 (GHSHRHSHEDFHH) and 66-114 (HTHE…EHSH). Residues 44–120 (GHSHRHSHED…EHSHGGYGES (77 aa)) form a disordered region. His66 is subject to Pros-methylhistidine. Helical transmembrane passes span 138–158 (ALGATVLISAAPFFVLFLIPV), 169–189 (LQILLSFASGGLLGDAFLHLI), and 214–234 (GPILSVGLWVLSGIVAFLVVE). The tract at residues 243 to 316 (GHEHSHGHGH…QHSGEEKAGS (74 aa)) is disordered. Phosphoserine is present on residues Ser278 and Ser279. Basic and acidic residues predominate over residues 298–316 (RPKDGPVRPQHSGEEKAGS). A helical transmembrane segment spans residues 388-408 (LLTAVGALAGTAFALLTEGGA). The segment at 428-473 (GDQAATQASPRSTSLPPVGEEDFREDPGPRQKGQQEKSGINVNCVS) is disordered. The segment covering 431 to 442 (AATQASPRSTSL) has biased composition (polar residues). Residues 452–462 (EDPGPRQKGQQ) show a composition bias toward basic and acidic residues. Over residues 463–473 (EKSGINVNCVS) the composition is skewed to polar residues.

This sequence belongs to the ZIP transporter (TC 2.A.5) family. KE4/Catsup subfamily. In terms of assembly, homodimer. Methylation at some His residue by METTL9 leads to reduced zinc-binding. In terms of processing, rapidly phosphorylated by CK2 following Zn(2+) treatment. This phosphorylation is required for efficient cytosolic Zn(2+) release.

The protein resides in the endoplasmic reticulum membrane. The protein localises to the golgi apparatus. It is found in the cis-Golgi network membrane. It catalyses the reaction Zn(2+)(in) = Zn(2+)(out). Its function is as follows. Transports Zn(2+) from the endoplasmic reticulum (ER)/Golgi apparatus to the cytosol, playing an essential role in the regulation of cytosolic zinc levels. Acts as a gatekeeper of zinc release from intracellular stores, requiring post-translational activation by phosphorylation on residues, resulting in activation of multiple downstream pathways leading to cell growth and proliferation. Has an essential role in B cell development and is required for proper B cell receptor signaling. Plays an important role in maintaining intestinal epithelial homeostasis and skin dermis development by regulating ER function. Controls cell signaling pathways involved in glucose metabolism in skeletal muscle. Has a protective role against ER stress in different biological contexts. Mediates Zn(2+)-induced ferroptosis. In Sus scrofa (Pig), this protein is Zinc transporter SLC39A7 (SLC39A7).